We begin with the raw amino-acid sequence, 415 residues long: Gamma-glutamyl phosphate reductase (415 aa).

The protein belongs to the gamma-glutamyl phosphate reductase family.

The protein resides in the cytoplasm. The catalysed reaction is L-glutamate 5-semialdehyde + phosphate + NADP(+) = L-glutamyl 5-phosphate + NADPH + H(+). The protein operates within amino-acid biosynthesis; L-proline biosynthesis; L-glutamate 5-semialdehyde from L-glutamate: step 2/2. In terms of biological role, catalyzes the NADPH-dependent reduction of L-glutamate 5-phosphate into L-glutamate 5-semialdehyde and phosphate. The product spontaneously undergoes cyclization to form 1-pyrroline-5-carboxylate. The protein is Gamma-glutamyl phosphate reductase of Lachnospira eligens (strain ATCC 27750 / DSM 3376 / VPI C15-48 / C15-B4) (Eubacterium eligens).